A 321-amino-acid chain; its full sequence is Auxin-responsive protein IAA8 (321 aa).

The EAR-like (transcriptional repression) motif lies at 54–58 (LRLGL). The PB1 domain occupies 199–301 (VLFVKVSMDG…TCQKLKIMKG (103 aa)).

This sequence belongs to the Aux/IAA family. As to quaternary structure, homodimers and heterodimers. Interacts with TPL. As to expression, highly expressed in the whole plant.

The protein localises to the nucleus. Functionally, aux/IAA proteins are short-lived transcriptional factors that function as repressors of early auxin response genes at low auxin concentrations. Repression is thought to result from the interaction with auxin response factors (ARFs), proteins that bind to the auxin-responsive promoter element (AuxRE). Formation of heterodimers with ARF proteins may alter their ability to modulate early auxin response genes expression. This Arabidopsis thaliana (Mouse-ear cress) protein is Auxin-responsive protein IAA8 (IAA8).